The sequence spans 431 residues: Phosphoribosylamine--glycine ligase (431 aa).

Positions 108 to 315 (KDFLARHEIP…LVLLVEAAFA (208 aa)) constitute an ATP-grasp domain. 134–195 (LQEKGAPIVI…EEFLDGEEAS (62 aa)) contributes to the ATP binding site. Mg(2+)-binding residues include glutamate 285 and asparagine 287.

It belongs to the GARS family. It depends on Mg(2+) as a cofactor. Mn(2+) is required as a cofactor.

The catalysed reaction is 5-phospho-beta-D-ribosylamine + glycine + ATP = N(1)-(5-phospho-beta-D-ribosyl)glycinamide + ADP + phosphate + H(+). Its pathway is purine metabolism; IMP biosynthesis via de novo pathway; N(1)-(5-phospho-D-ribosyl)glycinamide from 5-phospho-alpha-D-ribose 1-diphosphate: step 2/2. This is Phosphoribosylamine--glycine ligase from Pseudomonas putida (strain ATCC 47054 / DSM 6125 / CFBP 8728 / NCIMB 11950 / KT2440).